The sequence spans 462 residues: Fasciclin-like arabinogalactan protein 18 (462 aa).

The signal sequence occupies residues 1 to 25 (MDRCIYGCSVITIFFSFFFLLNASA). 3 N-linked (GlcNAc...) asparagine glycosylation sites follow: Asn-32, Asn-77, and Asn-293. FAS1 domains follow at residues 40 to 185 (NSNS…ERLL) and 271 to 414 (VKDF…DGVL).

It belongs to the fasciclin-like AGP family.

The protein resides in the secreted. Functionally, may be a cell surface adhesion protein. This Arabidopsis thaliana (Mouse-ear cress) protein is Fasciclin-like arabinogalactan protein 18 (FLA18).